The following is a 684-amino-acid chain: Beta-mannosyltransferase 1 (684 aa).

Topologically, residues methionine 1 to lysine 28 are cytoplasmic. Residues leucine 29–serine 49 traverse the membrane as a helical segment. The Extracellular portion of the chain corresponds to asparagine 50–phenylalanine 684. Asparagine 297 carries an N-linked (GlcNAc...) asparagine glycan.

The protein belongs to the BMT family.

It localises to the membrane. Functionally, beta-mannosyltransferase involved in cell wall biosynthesis. Required for addition of the first beta-mannose residue to acid-stable fraction of cell wall phosphopeptidomannan. Plays a key role in reducing host inflammatory response. The sequence is that of Beta-mannosyltransferase 1 (BMT1) from Candida albicans (strain SC5314 / ATCC MYA-2876) (Yeast).